Here is a 296-residue protein sequence, read N- to C-terminus: ATP synthase peripheral stalk subunit OSCP, mitochondrial (296 aa).

This sequence belongs to the ATPase delta chain family. Component of the ATP synthase complex composed at least of ATP5F1A/subunit alpha, ATP5F1B/subunit beta, ATP5MC1/subunit c (homooctomer), MT-ATP6/subunit a, MT-ATP8/subunit 8, ATP5ME/subunit e, ATP5MF/subunit f, ATP5MG/subunit g, ATP5MK/subunit k, ATP5MJ/subunit j, ATP5F1C/subunit gamma, ATP5F1D/subunit delta, ATP5F1E/subunit epsilon, ATP5PF/subunit F6, ATP5PB/subunit b, ATP5PD/subunit d, ATP5PO/subunit OSCP. ATP synthase complex consists of a soluble F(1) head domain (subunits alpha(3) and beta(3)) - the catalytic core - and a membrane F(0) domain - the membrane proton channel (subunits c, a, 8, e, f, g, k and j). These two domains are linked by a central stalk (subunits gamma, delta, and epsilon) rotating inside the F1 region and a stationary peripheral stalk (subunits F6, b, d, and OSCP).

The protein localises to the mitochondrion. The protein resides in the mitochondrion inner membrane. Subunit OSCP, of the mitochondrial membrane ATP synthase complex (F(1)F(0) ATP synthase or Complex V) that produces ATP from ADP in the presence of a proton gradient across the membrane which is generated by electron transport complexes of the respiratory chain. ATP synthase complex consist of a soluble F(1) head domain - the catalytic core - and a membrane F(1) domain - the membrane proton channel. These two domains are linked by a central stalk rotating inside the F(1) region and a stationary peripheral stalk. During catalysis, ATP synthesis in the catalytic domain of F(1) is coupled via a rotary mechanism of the central stalk subunits to proton translocation. In vivo, can only synthesize ATP although its ATP hydrolase activity can be activated artificially in vitro. Part of the complex F(0) domain. Part of the complex F(0) domain and the peripheric stalk, which acts as a stator to hold the catalytic alpha(3)beta(3) subcomplex and subunit a/ATP6 static relative to the rotary elements. The sequence is that of ATP synthase peripheral stalk subunit OSCP, mitochondrial from Dictyostelium discoideum (Social amoeba).